The primary structure comprises 470 residues: Poly(A) polymerase catalytic subunit (470 aa).

Catalysis depends on residues D192 and D194.

This sequence belongs to the poxviridae poly(A) polymerase catalytic subunit family. As to quaternary structure, heterodimer of a large (catalytic) subunit and a small (regulatory) subunit.

It carries out the reaction RNA(n) + ATP = RNA(n)-3'-adenine ribonucleotide + diphosphate. Polymerase that creates the 3'-poly(A) tail of mRNA's. This chain is Poly(A) polymerase catalytic subunit (PAPL), found in Deerpox virus (strain Mule deer/United States/W-848-83/1983) (DPV).